A 303-amino-acid polypeptide reads, in one-letter code: Oxygen-dependent coproporphyrinogen-III oxidase (303 aa).

Residue S93 coordinates substrate. Residues H97 and H107 each contribute to the a divalent metal cation site. Catalysis depends on H107, which acts as the Proton donor. 109-111 (NVR) contributes to the substrate binding site. Positions 146 and 176 each coordinate a divalent metal cation. The segment at 241 to 276 (YVEFNLVYDRGTLFGLQSGGRTESILMSLPPQVRWG) is important for dimerization. Residue 259-261 (GGR) participates in substrate binding.

Belongs to the aerobic coproporphyrinogen-III oxidase family. In terms of assembly, homodimer. It depends on a divalent metal cation as a cofactor.

The protein localises to the cytoplasm. It catalyses the reaction coproporphyrinogen III + O2 + 2 H(+) = protoporphyrinogen IX + 2 CO2 + 2 H2O. It participates in porphyrin-containing compound metabolism; protoporphyrin-IX biosynthesis; protoporphyrinogen-IX from coproporphyrinogen-III (O2 route): step 1/1. Its function is as follows. Involved in the heme biosynthesis. Catalyzes the aerobic oxidative decarboxylation of propionate groups of rings A and B of coproporphyrinogen-III to yield the vinyl groups in protoporphyrinogen-IX. The protein is Oxygen-dependent coproporphyrinogen-III oxidase of Pseudomonas putida (strain ATCC 47054 / DSM 6125 / CFBP 8728 / NCIMB 11950 / KT2440).